The following is a 594-amino-acid chain: Alpha-1,4-glucan:maltose-1-phosphate maltosyltransferase (594 aa).

Residues N244–G270 are disordered. Positions 246, 306, and 341 each coordinate alpha-maltose 1-phosphate. Catalysis depends on D377, which acts as the Nucleophile. N378 is a binding site for alpha-maltose 1-phosphate. The active-site Proton donor is the E406. K517–Y518 contacts alpha-maltose 1-phosphate.

The protein belongs to the glycosyl hydrolase 13 family. GlgE subfamily. As to quaternary structure, homodimer.

The catalysed reaction is alpha-maltose 1-phosphate + [(1-&gt;4)-alpha-D-glucosyl](n) = [(1-&gt;4)-alpha-D-glucosyl](n+2) + phosphate. Maltosyltransferase that uses maltose 1-phosphate (M1P) as the sugar donor to elongate linear or branched alpha-(1-&gt;4)-glucans. Is involved in a branched alpha-glucan biosynthetic pathway from trehalose, together with TreS, Mak and GlgB. The protein is Alpha-1,4-glucan:maltose-1-phosphate maltosyltransferase of Cereibacter sphaeroides (Rhodobacter sphaeroides).